The chain runs to 379 residues: Lipid-A-disaccharide synthase (379 aa).

The protein belongs to the LpxB family.

The catalysed reaction is a lipid X + a UDP-2-N,3-O-bis[(3R)-3-hydroxyacyl]-alpha-D-glucosamine = a lipid A disaccharide + UDP + H(+). It functions in the pathway bacterial outer membrane biogenesis; LPS lipid A biosynthesis. Its function is as follows. Condensation of UDP-2,3-diacylglucosamine and 2,3-diacylglucosamine-1-phosphate to form lipid A disaccharide, a precursor of lipid A, a phosphorylated glycolipid that anchors the lipopolysaccharide to the outer membrane of the cell. In Aeromonas hydrophila subsp. hydrophila (strain ATCC 7966 / DSM 30187 / BCRC 13018 / CCUG 14551 / JCM 1027 / KCTC 2358 / NCIMB 9240 / NCTC 8049), this protein is Lipid-A-disaccharide synthase.